A 327-amino-acid polypeptide reads, in one-letter code: 2-methoxy-6-polyprenyl-1,4-benzoquinol methylase, mitochondrial (327 aa).

Residues 1-43 (MAAPIRAFVLRVLSDSTRNIHHVLRCRSKYLCRRAAITARRGY) constitute a mitochondrion transit peptide. Residues T117, D171, and 199–200 (DA) contribute to the S-adenosyl-L-methionine site.

This sequence belongs to the class I-like SAM-binding methyltransferase superfamily. MenG/UbiE family. As to quaternary structure, component of a multi-subunit COQ enzyme complex, composed of at least coq3, coq4, coq5, coq6, coq7 and coq9.

It localises to the mitochondrion inner membrane. The enzyme catalyses a 2-methoxy-6-(all-trans-polyprenyl)benzene-1,4-diol + S-adenosyl-L-methionine = a 5-methoxy-2-methyl-3-(all-trans-polyprenyl)benzene-1,4-diol + S-adenosyl-L-homocysteine + H(+). It functions in the pathway cofactor biosynthesis; ubiquinone biosynthesis. Functionally, methyltransferase required for the conversion of 2-polyprenyl-6-methoxy-1,4-benzoquinol (DDMQH2) to 2-polyprenyl-3-methyl-6-methoxy-1,4-benzoquinol (DMQH2). The chain is 2-methoxy-6-polyprenyl-1,4-benzoquinol methylase, mitochondrial from Danio rerio (Zebrafish).